We begin with the raw amino-acid sequence, 111 residues long: Photosystem II reaction center Psb28 protein (111 aa).

The protein belongs to the Psb28 family. As to quaternary structure, part of the photosystem II complex.

It is found in the cellular thylakoid membrane. This Nostoc sp. (strain PCC 7120 / SAG 25.82 / UTEX 2576) protein is Photosystem II reaction center Psb28 protein.